The sequence spans 382 residues: Dodecanoyl-[acyl-carrier-protein] hydrolase, chloroplastic (382 aa).

Residues 1-83 (MATTSLASAF…FSAAEKQWTN (83 aa)) constitute a chloroplast transit peptide. Active-site residues include Asn-283, His-285, and Cys-320.

This sequence belongs to the acyl-ACP thioesterase family.

The protein localises to the plastid. It localises to the chloroplast. The catalysed reaction is dodecanoyl-[ACP] + H2O = dodecanoate + holo-[ACP] + H(+). Plays an essential role in chain termination during de novo fatty acid synthesis. High thioesterase activity for myristoyl-ACP. The protein is Dodecanoyl-[acyl-carrier-protein] hydrolase, chloroplastic of Cinnamomum camphora (Camphor tree).